The primary structure comprises 256 residues: MAFTLTNKNVVFVAGLGGIGLDTSKELVKRDLKNLVILDRIENPAAIAELKAINPKVTVTFYPYDVTVPIAETTKLLKTIFAQLKTIDVLINGAGILDDHQIERTIAVNYTGLVNTTTAILDFWDKRKGGPGGIICNIGSVTGFNAIYQVPVYSGTKAAVVNFTSSLAKLAPITGVTAYTVNPGITRTTLVHKFNSWLDVEPQVAEKLLAHPTQPSLACAQNFVKAIELNQNGAIWKLDLGTLEAIQWSKHWDSGI.

12 to 35 contributes to the NAD(+) binding site; the sequence is FVAGLGGIGLDTSKELVKRDLKNL. Residue Ser140 coordinates substrate. Tyr153 serves as the catalytic Proton acceptor.

This sequence belongs to the short-chain dehydrogenases/reductases (SDR) family. As to quaternary structure, homodimer.

It catalyses the reaction a primary alcohol + NAD(+) = an aldehyde + NADH + H(+). The enzyme catalyses a secondary alcohol + NAD(+) = a ketone + NADH + H(+). The chain is Alcohol dehydrogenase (Adh) from Drosophila yakuba (Fruit fly).